A 424-amino-acid chain; its full sequence is Protein UL117 (424 aa).

Residues 57–82 (IVPTTSSSLAPPRDDERRPTPPLRPP) are disordered.

It belongs to the herpesviridae U84 family.

The protein resides in the host nucleus. Its function is as follows. Plays a role in the inhibition of host DNA replication in the infected cell. Targets the mini-chromosome maintenance (MCM) complex and blocks the accumulation of MCM proteins and their loading onto host chromatin. The chain is Protein UL117 (UL117) from Human cytomegalovirus (strain AD169) (HHV-5).